The sequence spans 194 residues: Recombination protein RecR (194 aa).

Residues 55 to 70 (CRECGNLAEGELCPIC) form a C4-type zinc finger. The 94-residue stretch at 78–171 (SLLAVVESVA…RVTRPAYGLP (94 aa)) folds into the Toprim domain.

It belongs to the RecR family.

May play a role in DNA repair. It seems to be involved in an RecBC-independent recombinational process of DNA repair. It may act with RecF and RecO. The sequence is that of Recombination protein RecR from Thermus thermophilus (strain ATCC 27634 / DSM 579 / HB8).